Reading from the N-terminus, the 146-residue chain is Holo-[acyl-carrier-protein] synthase (146 aa).

Asp-8 and Glu-61 together coordinate Mg(2+).

It belongs to the P-Pant transferase superfamily. AcpS family. The cofactor is Mg(2+).

The protein resides in the cytoplasm. The enzyme catalyses apo-[ACP] + CoA = holo-[ACP] + adenosine 3',5'-bisphosphate + H(+). Functionally, transfers the 4'-phosphopantetheine moiety from coenzyme A to a Ser of acyl-carrier-protein. This is Holo-[acyl-carrier-protein] synthase from Rhodopseudomonas palustris (strain TIE-1).